The chain runs to 367 residues: Probable butyrate kinase (367 aa).

It belongs to the acetokinase family.

It localises to the cytoplasm. It catalyses the reaction butanoate + ATP = butanoyl phosphate + ADP. The sequence is that of Probable butyrate kinase from Bacillus cereus (strain G9842).